The chain runs to 721 residues: Far upstream element-binding protein 2 (721 aa).

The segment at 1–148 (MSDYSTGGPP…HPPPRTSMTE (148 aa)) is disordered. At S2 the chain carries N-acetylserine. Positions 8 to 17 (GPPPGPPPPA) are enriched in pro residues. Gly residues-rich tracts occupy residues 18-28 (GGGGGAAGAGG) and 36-69 (GAGDRGGGGPGGGGPGGGGASGGPSQPPGGGGPG). R40 is subject to Omega-N-methylarginine. K88 carries the N6-acetyllysine modification. Residue T101 is modified to Phosphothreonine. Residues 111-123 (RQLEDGDQPDSKK) show a composition bias toward basic and acidic residues. A Glycyl lysine isopeptide (Lys-Gly) (interchain with G-Cter in SUMO1); alternate cross-link involves residue K122. A Glycyl lysine isopeptide (Lys-Gly) (interchain with G-Cter in SUMO2); alternate cross-link involves residue K122. Phosphoserine is present on residues S126, S130, S182, S185, S194, and S275. KH domains lie at 145-209 (SMTE…KMML), 234-300 (GTVQ…CEMV), and 323-387 (GGGI…ARII). The interval 394–422 (LRSGPPGPPGAPGMPPGGRGRGRGQGNWG) is disordered. Residues 398 to 408 (PPGPPGAPGMP) are compositionally biased toward pro residues. Residues 409–422 (PGGRGRGRGQGNWG) are compositionally biased toward gly residues. 4 positions are modified to omega-N-methylarginine: R412, R414, R416, and R443. Residues 425-492 (GGEMTFSIPT…QQIDHAKQLI (68 aa)) form the KH 4 domain. Position 481 is a phosphoserine (S481). Residues 498–570 (GPLCPVGPGP…HDPNKAAAAA (73 aa)) form a disordered region. Composition is skewed to pro residues over residues 502–521 (PVGPGPGGPGPAGPMGPFHP) and 529–543 (PGAPPHAGGPPPHQY). Repeat unit 1 spans residues 572–583 (DPNAAWAAYYSH). A 4 X 12 AA imperfect repeats region spans residues 572–685 (DPNAAWAAYY…SAAWAEYYRQ (114 aa)). Over residues 588-614 (PPGPVPGPAPAPAAPPAQGEPPQPPPT) the composition is skewed to pro residues. Disordered regions lie at residues 588–650 (PPGP…KAWE), 659–678 (VATGGGPGAPPGSQPDYSAA), and 688–721 (AYYGQTPGPGGPQPPSTQQGQQQATEANGYELHL). Repeat copies occupy residues 618 to 629 (DYTKAWEEYYKK), 644 to 655 (DYTKAWEEYYKK), and 674 to 685 (DYSAAWAEYYRQ).

This sequence belongs to the KHSRP family. In terms of assembly, part of a ternary complex containing FUBP2, PTBP1, PTBP2 and HNRPH1. Interacts with PARN. Interacts with PQBP1.

The protein resides in the nucleus. It localises to the cytoplasm. Part of a ternary complex that binds to the downstream control sequence (DCS) of the pre-mRNA. Mediates exon inclusion in transcripts that are subject to tissue-specific alternative splicing. May interact with single-stranded DNA from the far-upstream element (FUSE). May activate gene expression. Also involved in degradation of inherently unstable mRNAs that contain AU-rich elements (AREs) in their 3'-UTR, possibly by recruiting degradation machinery to ARE-containing mRNAs. Binds to the dendritic targeting element and may play a role in mRNA trafficking. The chain is Far upstream element-binding protein 2 (Khsrp) from Rattus norvegicus (Rat).